A 37-amino-acid chain; its full sequence is Large ribosomal subunit protein bL36c (37 aa).

Belongs to the bacterial ribosomal protein bL36 family.

It is found in the plastid. It localises to the chloroplast. This chain is Large ribosomal subunit protein bL36c, found in Acorus calamus (Sweet flag).